The following is a 131-amino-acid chain: ER membrane protein complex subunit 5 (131 aa).

Topologically, residues 1–3 (MAP) are cytoplasmic. Residues 4-22 (SLWKGLVGVGLFALAHAAF) traverse the membrane as a helical segment. Residues 23–43 (SAAQHRSYMRLTEKEDESLPI) lie on the Lumenal side of the membrane. A helical membrane pass occupies residues 44–63 (DIVLQTLLAFAVTCYGIVHI). At 64 to 131 (AGEFKDMDAT…KLRKFDSLRR (68 aa)) the chain is on the cytoplasmic side. A Phosphoserine modification is found at Ser-120.

It belongs to the membrane magnesium transporter (TC 1.A.67) family. In terms of assembly, component of the ER membrane protein complex (EMC). Abundant in heart muscle and kidney with lower levels in liver and brain and very little expression in intestine or colon. In kidney, highest levels in distal convoluted tubule.

The protein resides in the endoplasmic reticulum membrane. It is found in the golgi apparatus membrane. The protein localises to the early endosome membrane. Its function is as follows. Part of the endoplasmic reticulum membrane protein complex (EMC) that enables the energy-independent insertion into endoplasmic reticulum membranes of newly synthesized membrane proteins. Preferentially accommodates proteins with transmembrane domains that are weakly hydrophobic or contain destabilizing features such as charged and aromatic residues. Involved in the cotranslational insertion of multi-pass membrane proteins in which stop-transfer membrane-anchor sequences become ER membrane spanning helices. It is also required for the post-translational insertion of tail-anchored/TA proteins in endoplasmic reticulum membranes. By mediating the proper cotranslational insertion of N-terminal transmembrane domains in an N-exo topology, with translocated N-terminus in the lumen of the ER, controls the topology of multi-pass membrane proteins like the G protein-coupled receptors. By regulating the insertion of various proteins in membranes, it is indirectly involved in many cellular processes. May be involved Mg(2+) transport. In Mus musculus (Mouse), this protein is ER membrane protein complex subunit 5.